The primary structure comprises 236 residues: ATP synthase subunit a, chloroplastic (236 aa).

5 consecutive transmembrane segments (helical) span residues 25-45 (MHGQ…AFAV), 87-107 (FIGT…LIPW), 123-143 (DINT…YAGL), 180-202 (LFGN…PLVI), and 210-230 (GLFT…AYIG).

This sequence belongs to the ATPase A chain family. F-type ATPases have 2 components, CF(1) - the catalytic core - and CF(0) - the membrane proton channel. CF(1) has five subunits: alpha(3), beta(3), gamma(1), delta(1), epsilon(1). CF(0) has four main subunits: a, b, b' and c.

It is found in the plastid. The protein localises to the chloroplast thylakoid membrane. In terms of biological role, key component of the proton channel; it plays a direct role in the translocation of protons across the membrane. This is ATP synthase subunit a, chloroplastic from Ostreococcus tauri.